The chain runs to 202 residues: Pyridoxal 5'-phosphate synthase subunit PdxT (202 aa).

50–52 contacts L-glutamine; it reads GES. Residue Cys82 is the Nucleophile of the active site. L-glutamine contacts are provided by residues Arg111 and 140–141; that span reads IR. Residues His176 and Glu178 each act as charge relay system in the active site.

It belongs to the glutaminase PdxT/SNO family. As to quaternary structure, in the presence of PdxS, forms a dodecamer of heterodimers. Only shows activity in the heterodimer.

The enzyme catalyses aldehydo-D-ribose 5-phosphate + D-glyceraldehyde 3-phosphate + L-glutamine = pyridoxal 5'-phosphate + L-glutamate + phosphate + 3 H2O + H(+). It carries out the reaction L-glutamine + H2O = L-glutamate + NH4(+). It functions in the pathway cofactor biosynthesis; pyridoxal 5'-phosphate biosynthesis. Its function is as follows. Catalyzes the hydrolysis of glutamine to glutamate and ammonia as part of the biosynthesis of pyridoxal 5'-phosphate. The resulting ammonia molecule is channeled to the active site of PdxS. This Streptomyces coelicolor (strain ATCC BAA-471 / A3(2) / M145) protein is Pyridoxal 5'-phosphate synthase subunit PdxT.